Consider the following 1206-residue polypeptide: DNA polymerase beta (1206 aa).

Tandem repeats lie at residues 1071-1074 (AGNP), 1075-1078 (AGNP), 1079-1082 (AGNP), and 1083-1086 (AGNA). The 4 X 4 AA tandem repeats of A-G-[NK]-[PA] stretch occupies residues 1071–1086 (AGNPAGNPAGNPAGNA).

Belongs to the DNA polymerase type-B family.

The catalysed reaction is DNA(n) + a 2'-deoxyribonucleoside 5'-triphosphate = DNA(n+1) + diphosphate. DNA-directed DNA polymerase involved in viral DNA replication. The chain is DNA polymerase beta from Ornithodoros (relapsing fever ticks).